The following is a 259-amino-acid chain: Imidazole glycerol phosphate synthase subunit HisF (259 aa).

Catalysis depends on residues Asp11 and Asp130.

Belongs to the HisA/HisF family. Heterodimer of HisH and HisF.

Its subcellular location is the cytoplasm. The enzyme catalyses 5-[(5-phospho-1-deoxy-D-ribulos-1-ylimino)methylamino]-1-(5-phospho-beta-D-ribosyl)imidazole-4-carboxamide + L-glutamine = D-erythro-1-(imidazol-4-yl)glycerol 3-phosphate + 5-amino-1-(5-phospho-beta-D-ribosyl)imidazole-4-carboxamide + L-glutamate + H(+). Its pathway is amino-acid biosynthesis; L-histidine biosynthesis; L-histidine from 5-phospho-alpha-D-ribose 1-diphosphate: step 5/9. Functionally, IGPS catalyzes the conversion of PRFAR and glutamine to IGP, AICAR and glutamate. The HisF subunit catalyzes the cyclization activity that produces IGP and AICAR from PRFAR using the ammonia provided by the HisH subunit. This is Imidazole glycerol phosphate synthase subunit HisF from Oleidesulfovibrio alaskensis (strain ATCC BAA-1058 / DSM 17464 / G20) (Desulfovibrio alaskensis).